A 129-amino-acid polypeptide reads, in one-letter code: Cuticle protein 12.5 (129 aa).

Repeat copies occupy residues 7–10 (AAPA), 15–18 (AAPA), 23–26 (AAPA), 28–31 (AAPV), 37–40 (AAPA), 67–70 (AAPA), 79–82 (AAPA), 91–94 (AAPA), 103–106 (AAPA), and 117–120 (AAPA).

Its function is as follows. Component of the cuticle of migratory locust which contains more than 100 different structural proteins. This is Cuticle protein 12.5 from Locusta migratoria (Migratory locust).